The following is a 227-amino-acid chain: uncharacterized protein (227 aa).

7 consecutive transmembrane segments (helical) span residues 15-34, 55-77, 92-114, 121-140, 145-167, 180-202, and 206-224; these read FIAA…FLIY, TFLF…ASGV, AFSM…YSLL, FPGE…TSLL, LVFL…VNYS, PLYI…FLPL, and FAIY…YRVL.

The protein localises to the cell membrane. This is an uncharacterized protein from Archaeoglobus fulgidus (strain ATCC 49558 / DSM 4304 / JCM 9628 / NBRC 100126 / VC-16).